We begin with the raw amino-acid sequence, 670 residues long: PML-RARA-regulated adapter molecule 1 (670 aa).

The disordered stretch occupies residues 1-561 (MAHHLPAAME…PQQLPPMDPK (561 aa)). Over residues 31 to 43 (DLPKKPPKPEFGK) the composition is skewed to basic and acidic residues. Repeat copies occupy residues 70–81 (KPPPPEVTDLPK), 82–93 (KPPPPEVTDLPK), 94–105 (KPPPPEVTDLPK), and 106–117 (KPPPPEVTDLPK). Residues 70 to 165 (KPPPPEVTDL…SLPEPGAPAR (96 aa)) are 4 X 12 AA repeats of K-P-P-[PQ]-P-[EQ]-[VAF]-T-D-L-P-K. The segment covering 114–129 (DLPKKPSKLELSDLSK) has biased composition (basic and acidic residues). Residue serine 340 is modified to Phosphoserine. Low complexity predominate over residues 386 to 398 (SSASESSLPAAVA). A compositionally biased stretch (pro residues) spans 454–463 (PAKPPLPPGP). A compositionally biased stretch (acidic residues) spans 504-514 (EIYELYDDVEP). Over residues 515–528 (RDDSSPSPKGRDEA) the composition is skewed to basic and acidic residues. The 79-residue stretch at 571–649 (KAEREFRKKF…PRTALLPLET (79 aa)) folds into the SH3 domain.

Interacts with SKAP2, LCP2 and DBNL. May interact with LYN. Interacts with NEK6. May be phosphorylated on tyrosines. Expressed in peripheral blood leukocytes and bone marrow. Expressed in monocytes, and to a lesser extent in granulocytes and lymphocytes. Not expressed in non hematopoietic tissues except in lung.

In terms of biological role, may be involved in myeloid differentiation. May be involved in integrin signaling in neutrophils. Binds to PtdIns(4)P. This chain is PML-RARA-regulated adapter molecule 1 (PRAM1), found in Homo sapiens (Human).